Here is a 498-residue protein sequence, read N- to C-terminus: Hexokinase-1 (498 aa).

In terms of domain architecture, Hexokinase spans 39–492; it reads AAAQRVVAEL…SGLGAALVAA (454 aa). A hexokinase small subdomain region spans residues 95 to 233; it reads TGGEEGSYYA…GLDMRVSALI (139 aa). Residues Gly-109, Thr-110, and Asn-111 each coordinate ADP. D-glucose contacts are provided by Thr-199, Lys-200, Asn-234, and Asp-235. The interval 234 to 481 is hexokinase large subdomain; it reads NDTVGTLAAG…ERVVVKLASD (248 aa). Position 258 (Thr-258) interacts with ADP. D-glucose-binding residues include Asn-261, Glu-290, and Glu-321. Gly-446 serves as a coordination point for ADP.

Belongs to the hexokinase family. As to expression, highly expressed in senescent leaves.

The enzyme catalyses a D-hexose + ATP = a D-hexose 6-phosphate + ADP + H(+). It carries out the reaction D-fructose + ATP = D-fructose 6-phosphate + ADP + H(+). It catalyses the reaction D-glucose + ATP = D-glucose 6-phosphate + ADP + H(+). It participates in carbohydrate metabolism; hexose metabolism. The protein operates within carbohydrate degradation; glycolysis; D-glyceraldehyde 3-phosphate and glycerone phosphate from D-glucose: step 1/4. In terms of biological role, fructose and glucose phosphorylating enzyme. Acts as a positive regulator of leaf senescence by mediating glucose accumulation and inducing an increase in reactive oxygen species (ROS). The protein is Hexokinase-1 (HXK1) of Oryza sativa subsp. japonica (Rice).